The sequence spans 167 residues: Probable chemoreceptor glutamine deamidase CheD (167 aa).

The protein belongs to the CheD family.

It catalyses the reaction L-glutaminyl-[protein] + H2O = L-glutamyl-[protein] + NH4(+). In terms of biological role, probably deamidates glutamine residues to glutamate on methyl-accepting chemotaxis receptors (MCPs), playing an important role in chemotaxis. This is Probable chemoreceptor glutamine deamidase CheD from Natronomonas pharaonis (strain ATCC 35678 / DSM 2160 / CIP 103997 / JCM 8858 / NBRC 14720 / NCIMB 2260 / Gabara) (Halobacterium pharaonis).